The following is a 94-amino-acid chain: Integration host factor subunit beta (94 aa).

It belongs to the bacterial histone-like protein family. Heterodimer of an alpha and a beta chain.

This protein is one of the two subunits of integration host factor, a specific DNA-binding protein that functions in genetic recombination as well as in transcriptional and translational control. The polypeptide is Integration host factor subunit beta (Azoarcus sp. (strain BH72)).